The chain runs to 2492 residues: MTAEPMSESKLNTLVQKLHDFLAHSSEESEETSSPPRLAMNQNTDKISGSGSNSDMMENSKEEGTSSSEKSKSSGSSRSKRKPSIVTKYVESDDEKPLDDETVNEDASNENSENDITMQSLPKGTVIVQPEPVLNEDKDDFKGPEFRSRSKMKTENLKKRGEDGLHGIVSCTACGQQVNHFQKDSIYRHPSLQVLICKNCFKYYMSDDISRDSDGMDEQCRWCAEGGNLICCDFCHNAFCKKCILRNLGRKELSTIMDENNQWYCYICHPEPLLDLVTACNSVFDNLEQLLQQNKKKIKVDSEKSNKVYEHTSRFSPKKTSSNCNGEEKKLDDSCSGSVTYSYSALIVPKEMIKKAKKLIETTANMNSSYVKFLKQATDNSEINSATKLRQLKAFKSVLADIKKAHLALEEDLNSEFRAMDAVSKEKNTKEHKVIEAKFETKARKGEKPCALEKKDISKSEAKLSRKQVDSEHMYQNVPTEEQRANKSTGGEHKKSDRKEEPQYEPANTSEDLDMDIVSVPSSVPEDIFENLETAMEVQSSVDHQGDGSSGTEQEVESSSVKLSISSKDNRGGIKSKTTAKVTKELYVKLTPVSLSNSPIKGADCQEVPQDKDGYKSCGLNPKLEKCGLGQENSDNEHLVENEVSLLLEESDLRRSPRVKTTPLRRQTETNPVTSNSDEECNETVKEKQKLSVPVRKKDKRNSSDSAIDNPKPNKLPKSKQSETVDQNSDSDEMLAILKEVSRMSHSSSSDTDINEIHTNHKTLYDLKTQAGKDDKGKRKRKSSTSGSDFDTKKGKSAKSSIISKKKRQTQSESSNYDSELEKEIKSMSKIGAARTTKKRIPNTKDFDSSEDEKHSKKGMDNQGHKNLKTSQEGSSDDAERKQERENFSSAEGTVDKDTTIMELRDRLPKKQQASASTDGVDKLSGKEEGFTSLEVRKVAETKEKSKHLKTKICKKVQDGLSDITEKFLKKDQSDETSEDDKKQSKKGTEEKKKTSDFKKKVIKMEQQYESSSDGTEKLPEREEICHFPKGIKQIKNGTTDGEKKNKKIRDKTSKKKDELSDYAEKSTGKGDSCDSSEDKKSKNGAYGREKKRCTLLGKSSRKRQDCSSSDTEKYSMKEDGCNSSDKRLKRIELRERRNLSSKRNTKEIQSGSSSSDAEESSEDNKKKKQRTSSKKKAVIVKEKKRNSLRTSTKRKQADITSSSSSDIEDDDQNSIGEGSSDEQKIKPVTENLVLSSHTGFCQSSGDEALSKSVPVTVDDDDDDNDPENRIAKKMLLEEIKANLSSDEDGSSDDEPEEGKKRTGKQNEENPGDEEAKNQVNSESDSDSEESKKPRYRHRLLRHKLTVSDGESGEEKKTKPKEHKEVKGRNRRKVSSEDSEDSDFQESGVSEEVSESEDEQRPRTRSAKKAELEENQRSYKQKKKRRRIKVQEDSSSENKSNSEEEEEEKEEEEEEEEEEEEEEEDENDDSKSPGKGRKKIRKILKDDKLRTETQNALKEEEERRKRIAEREREREKLREVIEIEDASPTKCPITTKLVLDEDEETKEPLVQVHRNMVIKLKPHQVDGVQFMWDCCCESVKKTKKSPGSGCILAHCMGLGKTLQVVSFLHTVLLCDKLDFSTALVVCPLNTALNWMNEFEKWQEGLKDDEKLEVSELATVKRPQERSYMLQRWQEDGGVMIIGYEMYRNLAQGRNVKSRKLKEIFNKALVDPGPDFVVCDEGHILKNEASAVSKAMNSIRSRRRIILTGTPLQNNLIEYHCMVNFIKENLLGSIKEFRNRFINPIQNGQCADSTMVDVRVMKKRAHILYEMLAGCVQRKDYTALTKFLPPKHEYVLAVRMTSIQCKLYQYYLDHLTGVGNNSEGGRGKAGAKLFQDFQMLSRIWTHPWCLQLDYISKENKGYFDEDSMDEFIASDSDETSMSLSSDDYTKKKKKGKKGKKDSSSSGSGSDNDVEVIKVWNSRSRGGGEGNVDETGNNPSVSLKLEESKATSSSNPSSPAPDWYKDFVTDADAEVLEHSGKMVLLFEILRMAEEIGDKVLVFSQSLISLDLIEDFLELASREKTEDKDKPLIYKGEGKWLRNIDYYRLDGSTTAQSRKKWAEEFNDETNVRGRLFIISTKAGSLGINLVAANRVIIFDASWNPSYDIQSIFRVYRFGQTKPVYVYRFLAQGTMEDKIYDRQVTKQSLSFRVVDQQQVERHFTMNELTELYTFEPDLLDDPNSEKKKKRDTPMLPKDTILAELLQIHKEHIVGYHEHDSLLDHKEEEELTEEERKAAWAEYEAEKKGLTMRFNIPTGTNLPPVSFNSQTPYIPFNLGALSAMSNQQLEDLINQGREKVVEATNSVTAVRIQPLEDIISAVWKENMNLSEAQVQALALSRQASQELDVKRREAIYNDVLTKQQMLISCVQRILMNRRLQQQYNQQQQQQMTYQQATLGHLMMPKPPNLIMNPSNYQQIDMRGMYQPVAGGMQPPPLQRAPPPMRSKNPGPSQGKSM.

Residues 1–146 (MTAEPMSESK…DKDDFKGPEF (146 aa)) form a disordered region. Residue K10 forms a Glycyl lysine isopeptide (Lys-Gly) (interchain with G-Cter in SUMO2) linkage. Residues 17 to 27 (KLHDFLAHSSE) are compositionally biased toward basic and acidic residues. Residues S25 and S34 each carry the phosphoserine modification. The segment covering 40 to 57 (MNQNTDKISGSGSNSDMM) has biased composition (polar residues). The segment covering 58-72 (ENSKEEGTSSSEKSK) has biased composition (basic and acidic residues). The residue at position 89 (Y89) is a Phosphotyrosine. S92 and S112 each carry phosphoserine. Positions 92-108 (SDDEKPLDDETVNEDAS) are enriched in acidic residues. Basic and acidic residues predominate over residues 135–146 (NEDKDDFKGPEF). Residues K138 and K142 each participate in a glycyl lysine isopeptide (Lys-Gly) (interchain with G-Cter in SUMO2) cross-link. The 138-residue stretch at 159-296 (KRGEDGLHGI…LEQLLQQNKK (138 aa)) folds into the ADD domain. The GATA-type; atypical zinc-finger motif lies at 170-206 (SCTACGQQVNHFQKDSIYRHPSLQVLICKNCFKYYMS). A Phosphoserine modification is found at S213. A PHD-type; atypical zinc finger spans residues 217 to 272 (DEQCRWCAEGGNLICCDFCHNAFCKKCILRNLGRKELSTIMDENNQWYCYICHPEP). K299 participates in a covalent cross-link: Glycyl lysine isopeptide (Lys-Gly) (interchain with G-Cter in SUMO2). A Phosphoserine modification is found at S316. Residue K438 forms a Glycyl lysine isopeptide (Lys-Gly) (interchain with G-Cter in SUMO2) linkage. 2 stretches are compositionally biased toward basic and acidic residues: residues 457-473 (ISKSEAKLSRKQVDSEH) and 481-502 (EEQRANKSTGGEHKKSDRKEEP). Residues 457–581 (ISKSEAKLSR…GGIKSKTTAK (125 aa)) form a disordered region. Positions 557 to 567 (ESSSVKLSISS) are enriched in low complexity. The PxVxL motif motif lies at 581 to 594 (KVTKELYVKLTPVS). The residue at position 591 (T591) is a Phosphothreonine. The interval 593-619 (VSLSNSPIKGADCQEVPQDKDGYKSCG) is disordered. S594 and S598 each carry phosphoserine. Residue K623 forms a Glycyl lysine isopeptide (Lys-Gly) (interchain with G-Cter in SUMO1); alternate linkage. K623 is covalently cross-linked (Glycyl lysine isopeptide (Lys-Gly) (interchain with G-Cter in SUMO2); alternate). At S634 the chain carries Phosphoserine. The tract at residues 652–949 (DLRRSPRVKT…AETKEKSKHL (298 aa)) is disordered. A Phosphothreonine modification is found at T674. Residues S675, S677, S729, and S731 each carry the phosphoserine modification. Residues 755 to 777 (NEIHTNHKTLYDLKTQAGKDDKG) are compositionally biased toward basic and acidic residues. A phosphoserine mark is found at S784, S819, S849, S850, S875, and S876. The segment covering 843-864 (NTKDFDSSEDEKHSKKGMDNQG) has biased composition (basic and acidic residues). The span at 878 to 887 (DAERKQEREN) shows a compositional bias: basic and acidic residues. At S889 the chain carries Phosphoserine. Composition is skewed to basic and acidic residues over residues 894–909 (TVDKDTTIMELRDRLP) and 920–944 (GVDKLSGKEEGFTSLEVRKVAETKE). Residue S962 is modified to Phosphoserine. Residue K967 is modified to N6-acetyllysine. Over residues 967–1004 (KFLKKDQSDETSEDDKKQSKKGTEEKKKTSDFKKKVIK) the composition is skewed to basic and acidic residues. The segment at 967 to 1479 (KFLKKDQSDE…SKSPGKGRKK (513 aa)) is disordered. S974 carries the post-translational modification Phosphoserine. Position 977 is a phosphothreonine (T977). A Glycyl lysine isopeptide (Lys-Gly) (interchain with G-Cter in SUMO2) cross-link involves residue K1004. 3 positions are modified to phosphoserine: S1011, S1012, and S1013. A compositionally biased stretch (basic and acidic residues) spans 1015-1027 (GTEKLPEREEICH). The span at 1045 to 1055 (KNKKIRDKTSK) shows a compositional bias: basic residues. Composition is skewed to basic and acidic residues over residues 1056–1082 (KKDELSDYAEKSTGKGDSCDSSEDKKS) and 1103–1139 (KRQDCSSSDTEKYSMKEDGCNSSDKRLKRIELRERRN). Residue S1061 is modified to Phosphoserine. Phosphotyrosine is present on Y1063. Basic residues predominate over residues 1167 to 1195 (KKKQRTSSKKKAVIVKEKKRNSLRTSTKR). The tract at residues 1189–1326 (LRTSTKRKQA…KNQVNSESDS (138 aa)) is interaction with DAXX. The span at 1233–1246 (LVLSSHTGFCQSSG) shows a compositional bias: polar residues. Phosphoserine is present on residues S1244, S1245, and S1253. The segment covering 1267–1281 (PENRIAKKMLLEEIK) has biased composition (basic and acidic residues). Over residues 1286–1297 (SDEDGSSDDEPE) the composition is skewed to acidic residues. A compositionally biased stretch (basic and acidic residues) spans 1298-1308 (EGKKRTGKQNE). S1322, S1324, and S1326 each carry phosphoserine. The span at 1334 to 1345 (PRYRHRLLRHKL) shows a compositional bias: basic residues. Phosphoserine is present on residues S1348 and S1352. Composition is skewed to basic and acidic residues over residues 1353 to 1368 (GEEKKTKPKEHKEVKG) and 1408 to 1417 (KKAELEENQR). A compositionally biased stretch (basic residues) spans 1419–1428 (YKQKKKRRRI). The span at 1443 to 1468 (EEEEEEKEEEEEEEEEEEEEEEDEND) shows a compositional bias: acidic residues. A Glycyl lysine isopeptide (Lys-Gly) (interchain with G-Cter in SUMO2) cross-link involves residue K1488. At S1527 the chain carries Phosphoserine. T1529 carries the phosphothreonine modification. The Helicase ATP-binding domain occupies 1581–1768 (KTKKSPGSGC…HCMVNFIKEN (188 aa)). 1594 to 1601 (HCMGLGKT) is a binding site for ATP. Residues 1719-1722 (DEGH) carry the DEGH box motif. 2 positions are modified to phosphoserine: S1906 and S1913. The segment at 1913–2000 (SDSDETSMSL…SSNPSSPAPD (88 aa)) is disordered. Residues 1929–1938 (KKKKKGKKGK) are compositionally biased toward basic residues. K1982 is covalently cross-linked (Glycyl lysine isopeptide (Lys-Gly) (interchain with G-Cter in SUMO1); alternate). Residue K1982 forms a Glycyl lysine isopeptide (Lys-Gly) (interchain with G-Cter in SUMO2); alternate linkage. Residue K1987 forms a Glycyl lysine isopeptide (Lys-Gly) (interchain with G-Cter in SUMO2) linkage. A compositionally biased stretch (low complexity) spans 1990 to 1999 (SSSNPSSPAP). S1992 and S1996 each carry phosphoserine. The segment at 2010–2280 (DAEVLEHSGK…RKAAWAEYEA (271 aa)) is interaction with MECP2. The Helicase C-terminal domain maps to 2025 to 2205 (EILRMAEEIG…ERHFTMNELT (181 aa)). The residue at position 2220 (S2220) is a Phosphoserine. A disordered region spans residues 2462 to 2492 (PVAGGMQPPPLQRAPPPMRSKNPGPSQGKSM). Residues 2468–2479 (QPPPLQRAPPPM) are compositionally biased toward pro residues. 2 positions are modified to omega-N-methylarginine: R2474 and R2480.

This sequence belongs to the SNF2/RAD54 helicase family. Interacts with DAXX to form the chromatin remodeling complex ATRX:DAXX. Probably binds EZH2. Binds annexin V in a calcium and phosphatidylcholine/phosphatidylserine-dependent manner. Interacts directly with CBX5 via the PxVxL motif. Interacts with RAD50, MRE11 and NBN; indicative for an association with the MRN complex. Interacts with histone MACROH2A1. Interacts with histone H3 peptides methylated at 'Lys-10' with preferences H3K9me3 &gt; H3K9me2 &gt; H3K9me1. Interacts with histone H3 peptides unmethylated at 'Lys-5' (H3K4me0). Interacts with MECP2, SMC1 and SMC3. Interacts with SETDB1, TRIM28 and ZNF274.

It localises to the nucleus. Its subcellular location is the chromosome. The protein resides in the telomere. It is found in the PML body. It catalyses the reaction ATP + H2O = ADP + phosphate + H(+). Involved in transcriptional regulation and chromatin remodeling. Facilitates DNA replication in multiple cellular environments and is required for efficient replication of a subset of genomic loci. Binds to DNA tandem repeat sequences in both telomeres and euchromatin and in vitro binds DNA quadruplex structures. May help stabilizing G-rich regions into regular chromatin structures by remodeling G4 DNA and incorporating H3.3-containing nucleosomes. Catalytic component of the chromatin remodeling complex ATRX:DAXX which has ATP-dependent DNA translocase activity and catalyzes the replication-independent deposition of histone H3.3 in pericentric DNA repeats outside S-phase and telomeres, and the in vitro remodeling of H3.3-containing nucleosomes. Its heterochromatin targeting is proposed to involve a combinatorial readout of histone H3 modifications (specifically methylation states of H3K9 and H3K4) and association with CBX5. Involved in maintaining telomere structural integrity in embryonic stem cells which probably implies recruitment of CBX5 to telomeres. May be involved in transcriptional regulation of telomeric repeat-containing RNA (TERRA). Acts as a negative regulator of chromatin incorporation of transcriptionally repressive histone MACROH2A1, particularily at telomeres. Participates in the allele-specific gene expression at the imprinted IGF2/H19 gene locus. On the maternal allele, required for the chromatin occupancy of SMC1 and CTCTF within the H19 imprinting control region (ICR) and involved in esatblishment of histone tails modifications in the ICR. May be involved in brain development and facial morphogenesis. Binds to zinc-finger coding genes with atypical chromatin signatures and regulates its H3K9me3 levels. Forms a complex with ZNF274, TRIM28 and SETDB1 to facilitate the deposition and maintenance of H3K9me3 at the 3' exons of zinc-finger genes. The sequence is that of Transcriptional regulator ATRX (ATRX) from Pongo pygmaeus (Bornean orangutan).